We begin with the raw amino-acid sequence, 250 residues long: Lymphocyte function-associated antigen 3 (250 aa).

Residues M1–C28 form the signal peptide. Residues F29–R215 are Extracellular-facing. The Ig-like domain occupies S30–L121. N-linked (GlcNAc...) asparagine glycans are attached at residues N40, N94, N109, N135, N169, and N195. Cysteines 142 and 187 form a disulfide. The helical transmembrane segment at Y216 to L238 threads the bilayer. The Cytoplasmic portion of the chain corresponds to K239–N250.

In terms of assembly, interacts with CD2. Interacts with CMTM6. (Microbial infection) Interacts with human cytomegalovirus protein UL148; this interaction retains immature CD58 intracellularly.

It is found in the cell membrane. In terms of biological role, ligand of the T-lymphocyte CD2 glycoprotein. This interaction is important in mediating thymocyte interactions with thymic epithelial cells, antigen-independent and -dependent interactions of T-lymphocytes with target cells and antigen-presenting cells and the T-lymphocyte rosetting with erythrocytes. In addition, the LFA-3/CD2 interaction may prime response by both the CD2+ and LFA-3+ cells. The sequence is that of Lymphocyte function-associated antigen 3 (CD58) from Homo sapiens (Human).